We begin with the raw amino-acid sequence, 364 residues long: Protein-glutamate methylesterase/protein-glutamine glutaminase 1 (364 aa).

Residues 6–123 (KVLCVDDSAL…RDGMLDYSEK (118 aa)) enclose the Response regulatory domain. Aspartate 57 carries the post-translational modification 4-aspartylphosphate. The CheB-type methylesterase domain occupies 165–357 (LVSTEKLIIV…RRIMARLASM (193 aa)). Residues serine 177, histidine 203, and aspartate 299 contribute to the active site.

Belongs to the CheB family. Post-translationally, phosphorylated by CheA. Phosphorylation of the N-terminal regulatory domain activates the methylesterase activity.

The protein localises to the cytoplasm. It catalyses the reaction [protein]-L-glutamate 5-O-methyl ester + H2O = L-glutamyl-[protein] + methanol + H(+). It carries out the reaction L-glutaminyl-[protein] + H2O = L-glutamyl-[protein] + NH4(+). Its function is as follows. Involved in chemotaxis. Part of a chemotaxis signal transduction system that modulates chemotaxis in response to various stimuli. Catalyzes the demethylation of specific methylglutamate residues introduced into the chemoreceptors (methyl-accepting chemotaxis proteins or MCP) by CheR. Also mediates the irreversible deamidation of specific glutamine residues to glutamic acid. The polypeptide is Protein-glutamate methylesterase/protein-glutamine glutaminase 1 (Burkholderia mallei (strain ATCC 23344)).